We begin with the raw amino-acid sequence, 676 residues long: Pescadillo homolog (676 aa).

Positions 298-327 form a coiled coil; sequence IAAMADDEDEQEVEMAEADAEDDDEEENTE. 4 disordered regions span residues 298 to 338, 413 to 439, 478 to 502, and 515 to 676; these read IAAM…TAPD, PLANGASAAGAEDAATPQVQWPHSTKP, VKPKKGEYDPNLPLAAQQPDGEAEA, and EVDD…AERA. Over residues 302–327 the composition is skewed to acidic residues; the sequence is ADDEDEQEVEMAEADAEDDDEEENTE. The BRCT domain occupies 351–466; the sequence is EIASLFAPFT…KLLRPDLYAP (116 aa). Low complexity predominate over residues 415–427; it reads ANGASAAGAEDAA. Acidic residues-rich tracts occupy residues 515–524, 539–557, and 565–577; these read EVDDDEDMDA, DVADSDDDDEDDSESDAEG, and FDDESEAESDISE. Residues 568-676 are a coiled coil; sequence ESEAESDISE…EKAKAAAERA (109 aa). 4 stretches are compositionally biased toward basic and acidic residues: residues 579-608, 620-631, 643-659, and 666-676; these read EAARLQHQRELEAEATGKKLDVKAPTKKEQ, KRAEEEERDRQK, KRIEYGENKRDTESENL, and LEKAKAAAERA.

This sequence belongs to the pescadillo family. In terms of assembly, component of the NOP7 complex, composed of ERB1, NOP7 and YTM1. The complex is held together by ERB1, which interacts with NOP7 via its N-terminal domain and with YTM1 via a high-affinity interaction between the seven-bladed beta-propeller domains of the 2 proteins. The NOP7 complex associates with the 66S pre-ribosome.

It is found in the nucleus. The protein resides in the nucleolus. The protein localises to the nucleoplasm. In terms of biological role, component of the NOP7 complex, which is required for maturation of the 25S and 5.8S ribosomal RNAs and formation of the 60S ribosome. This is Pescadillo homolog from Phaeosphaeria nodorum (strain SN15 / ATCC MYA-4574 / FGSC 10173) (Glume blotch fungus).